Reading from the N-terminus, the 339-residue chain is Isopentenyl-diphosphate delta-isomerase (339 aa).

Residue 7-8 (RK) participates in substrate binding. FMN is bound by residues S65, 66–68 (SMT), S96, and N125. 96 to 98 (SQR) is a substrate binding site. A substrate-binding site is contributed by Q160. E161 contributes to the Mg(2+) binding site. Residues K192, T222, and 293 to 294 (AG) each bind FMN.

The protein belongs to the IPP isomerase type 2 family. Homooctamer. Dimer of tetramers. Requires FMN as cofactor. NADPH is required as a cofactor. Mg(2+) serves as cofactor.

It localises to the cytoplasm. It carries out the reaction isopentenyl diphosphate = dimethylallyl diphosphate. Involved in the biosynthesis of isoprenoids. Catalyzes the 1,3-allylic rearrangement of the homoallylic substrate isopentenyl (IPP) to its allylic isomer, dimethylallyl diphosphate (DMAPP). The chain is Isopentenyl-diphosphate delta-isomerase from Vibrio parahaemolyticus serotype O3:K6 (strain RIMD 2210633).